Here is a 599-residue protein sequence, read N- to C-terminus: UvrABC system protein C (599 aa).

The GIY-YIG domain maps to 18–96 (QLPGVYKMLG…IKQHRPPYNI (79 aa)). The UVR domain occupies 207 to 242 (KELNQELIAKMEQAAADLEFEKAVFYRDRLSLLREV).

It belongs to the UvrC family. As to quaternary structure, interacts with UvrB in an incision complex.

Its subcellular location is the cytoplasm. Functionally, the UvrABC repair system catalyzes the recognition and processing of DNA lesions. UvrC both incises the 5' and 3' sides of the lesion. The N-terminal half is responsible for the 3' incision and the C-terminal half is responsible for the 5' incision. This Acinetobacter baumannii (strain SDF) protein is UvrABC system protein C.